Consider the following 809-residue polypeptide: Plasminogen (809 aa).

Positions 1–19 (MDHKEVVLLLLLFLKSGLG) are cleaved as a signal peptide. The 79-residue stretch at 20 to 98 (DSLDDYVNTQ…RDVVLFEKRI (79 aa)) folds into the PAN domain. 24 cysteine pairs are disulfide-bonded: C49–C73, C53–C61, C103–C181, C124–C164, C152–C176, C185–C262, C188–C316, C206–C245, C234–C257, C275–C352, C296–C335, C324–C347, C377–C454, C398–C437, C426–C449, C480–C559, C501–C542, C530–C554, C566–C684, C576–C584, C606–C622, C698–C765, C728–C744, and C755–C783. Kringle domains are found at residues 103–181 (CKTG…IPEC) and 185–262 (CMHC…IPRC). The O-linked (GalNAc...) threonine glycan is linked to T268. Kringle domains follow at residues 275–352 (CLKG…IPSC), 377–454 (CYRG…LKKC), and 480–559 (CMFG…VPQC). N-linked (GlcNAc...) asparagine glycosylation occurs at N308. A Peptidase S1 domain is found at 580-807 (VVGGCVSIPH…FVTWIEEIMR (228 aa)). A Phosphoserine modification is found at S596. Active-site charge relay system residues include H621 and D664. Residue S759 is the Charge relay system of the active site.

This sequence belongs to the peptidase S1 family. Plasminogen subfamily. In terms of assembly, interacts with CSPG4 and AMOT. Interacts (via the Kringle domains) with HRG; the interaction tethers PLG to the cell surface and enhances its activation. Interacts (via Kringle 4 domain) with ADA; the interaction stimulates PLG activation when in complex with DPP4. Angiostatin: Interacts with ATP5F1A; the interaction inhibits most of the angiogenic effects of angiostatin. Post-translationally, N-linked glycan contains N-acetyllactosamine, sialic acid and is core fucosylated. O-linked glycans consist of Gal-GalNAc disaccharide which is modified with up to 2 sialic acid residues (microheterogeneity). In terms of processing, in the presence of the inhibitor, the activation involves only cleavage after Arg-579, yielding two chains held together by two disulfide bonds. In the absence of the inhibitor, the activation involves additionally the removal of the activation peptide.

It localises to the secreted. The catalysed reaction is Preferential cleavage: Lys-|-Xaa &gt; Arg-|-Xaa, higher selectivity than trypsin. Converts fibrin into soluble products.. Converted into plasmin by plasminogen activators, both plasminogen and its activator being bound to fibrin. Cannot be activated with streptokinase. Functionally, plasmin dissolves the fibrin of blood clots and acts as a proteolytic factor in a variety of other processes including embryonic development, tissue remodeling, tumor invasion, and inflammation. In ovulation, weakens the walls of the Graafian follicle. It activates the urokinase-type plasminogen activator, collagenases and several complement zymogens, such as C1, C4 and C5. Cleavage of fibronectin and laminin leads to cell detachment and apoptosis. Also cleaves fibrin, thrombospondin and von Willebrand factor. Its role in tissue remodeling and tumor invasion may be modulated by CSPG4. Binds to cells. This chain is Plasminogen (PLG), found in Sus scrofa (Pig).